Here is a 202-residue protein sequence, read N- to C-terminus: MANLLFALAAYLIGSVSFAVVVSKLMGLPDPHSYGSGNPGATNVLRTGNKKAAILTLIGDALKGWLAVWLAARFGPAYGLNETGLAMVALAVFLGHLFPVYHRFAGGKGVATAAGILLAIDPILGLGTLATWLIIAFFFRYSSLAALVAAIFAPFFHVLMNGVDVMTGAIFVISVLLIARHRQNIAKLLAGKESRIGEKKKV.

Transmembrane regions (helical) follow at residues 2–22, 80–100, 119–139, and 158–178; these read ANLL…AVVV, LNET…LFPV, AIDP…AFFF, and VLMN…VLLI.

The protein belongs to the PlsY family. Probably interacts with PlsX.

The protein resides in the cell inner membrane. It carries out the reaction an acyl phosphate + sn-glycerol 3-phosphate = a 1-acyl-sn-glycero-3-phosphate + phosphate. Its pathway is lipid metabolism; phospholipid metabolism. In terms of biological role, catalyzes the transfer of an acyl group from acyl-phosphate (acyl-PO(4)) to glycerol-3-phosphate (G3P) to form lysophosphatidic acid (LPA). This enzyme utilizes acyl-phosphate as fatty acyl donor, but not acyl-CoA or acyl-ACP. This is Glycerol-3-phosphate acyltransferase from Cupriavidus necator (strain ATCC 17699 / DSM 428 / KCTC 22496 / NCIMB 10442 / H16 / Stanier 337) (Ralstonia eutropha).